We begin with the raw amino-acid sequence, 1189 residues long: Phosphatidylinositol 3,4,5-trisphosphate 5-phosphatase 1 (1189 aa).

Residues 5 to 101 (WNHGNITRSK…GLVTHLQYPV (97 aa)) form the SH2 domain. The segment covering 103–117 (LEEEDTGDDPEEDTV) has biased composition (acidic residues). The disordered stretch occupies residues 103 to 132 (LEEEDTGDDPEEDTVESVVSPPELPPRNIP). Residues 124-129 (PELPPR) carry the SH3-binding 1 motif. Residue serine 243 is modified to Phosphoserine. The disordered stretch occupies residues 870–906 (TERDESSGPKTLKSLTSHDPMKQWEVTSRAPPCSGSS). The short motif at 912 to 915 (NPNY) is the NPXY motif 1 element. Tyrosine 915 is subject to Phosphotyrosine. Residues 922–1189 (GPPMPLHVKQ…PGPLGRTAMQ (268 aa)) are disordered. The span at 931 to 943 (QTLSPDQQPTAWS) shows a compositional bias: polar residues. Serine 934 is modified (phosphoserine). Tyrosine 944 carries the phosphotyrosine modification. Serine 960 is subject to Phosphoserine. Over residues 961–971 (PPTPPGQPPIS) the composition is skewed to pro residues. Phosphothreonine is present on threonine 963. The SH3-binding 2 motif lies at 969–974 (PISPKK). Position 971 is a phosphoserine (serine 971). Residues 1016-1030 (MFENPLYGSLSSFPK) form an interaction with DAB2 region. The NPXY motif 2 motif lies at 1019–1022 (NPLY). Residue tyrosine 1022 is modified to Phosphotyrosine. Over residues 1033 to 1047 (PRKDQESPKMPRKEP) the composition is skewed to basic and acidic residues. The short motif at 1040-1051 (PKMPRKEPPPCP) is the SH3-binding 3 element. Pro residues predominate over residues 1134-1145 (PPTPTPRPPLPV). The span at 1157–1177 (KGRDYRDNTELPHHGKHRPEE) shows a compositional bias: basic and acidic residues.

It belongs to the inositol 1,4,5-trisphosphate 5-phosphatase family. Interacts with tyrosine phosphorylated form of SHC1. Interacts with tyrosine phosphorylated form of DOK1. Interacts with tyrosine phosphorylated form of DOK3. Interacts with tyrosine phosphorylated form of SLAMF1/CD150. Interacts with PTPN11 in response to IL-3. Interacts with receptor EPOR. Interacts with receptors MS4A2/FCER1B and FCER1G. Interacts with receptors FCGR2B and FCGR3. Interacts with receptor FCGR2A, leading to regulate gene expression during the phagocytic process. Interacts with GRB2. Interacts with PLCG1. Interacts with tyrosine kinases SRC and TEC. Interacts with c-Met/MET. Interacts with MILR1 (tyrosine-phosphorylated). Can weakly interact (via NPXY motif 2) with DAB2 (via PID domain); the interaction is impaired by tyrosine phosphorylation of the NPXY motif. Interacts with FCRL3 and FCRL6 (tyrosine phosphorylated form). Interacts (via SH2 domain) with tyrosine phosphorylated KLRC1 (via ITIM). Interacts with MPL/TPOR. In terms of processing, tyrosine phosphorylated by the members of the SRC family after exposure to a diverse array of extracellular stimuli such as cytokines, growth factors, antibodies, chemokines, integrin ligands and hypertonic and oxidative stress. Phosphorylated upon IgG receptor FCGR2B-binding. In terms of tissue distribution, specifically expressed in immune and hematopoietic cells. Expressed in bone marrow and blood cells. Levels vary considerably within this compartment. Present in at least 74% of immature CD34+ cells, whereas within the more mature population of CD33+ cells, it is present in only 10% of cells. Present in the majority of T-cells, while it is present in a minority of B-cells (at protein level).

It is found in the cytoplasm. It localises to the cell membrane. The protein resides in the membrane raft. The protein localises to the cytoskeleton. Its subcellular location is the membrane. The catalysed reaction is a 1,2-diacyl-sn-glycero-3-phospho-(1D-myo-inositol-3,4,5-trisphosphate) + H2O = a 1,2-diacyl-sn-glycero-3-phospho-(1D-myo-inositol-3,4-bisphosphate) + phosphate. It carries out the reaction 1D-myo-inositol 1,3,4,5-tetrakisphosphate + H2O = 1D-myo-inositol 1,3,4-trisphosphate + phosphate. The enzyme catalyses a 1,2-diacyl-sn-glycero-3-phospho-(1D-myo-inositol-4,5-bisphosphate) + H2O = a 1,2-diacyl-sn-glycero-3-phospho-(1D-myo-inositol 4-phosphate) + phosphate. Its activity is regulated as follows. Activated upon translocation to the sites of synthesis of PtdIns(3,4,5)P3 in the membrane. In terms of biological role, phosphatidylinositol (PtdIns) phosphatase that specifically hydrolyzes the 5-phosphate of phosphatidylinositol-3,4,5-trisphosphate (PtdIns(3,4,5)P3) to produce PtdIns(3,4)P2, thereby negatively regulating the PI3K (phosphoinositide 3-kinase) pathways. Able also to hydrolyzes the 5-phosphate of phosphatidylinositol-4,5-bisphosphate (PtdIns(4,5)P3) and inositol 1,3,4,5-tetrakisphosphate. Acts as a negative regulator of B-cell antigen receptor signaling. Mediates signaling from the FC-gamma-RIIB receptor (FCGR2B), playing a central role in terminating signal transduction from activating immune/hematopoietic cell receptor systems. Acts as a negative regulator of myeloid cell proliferation/survival and chemotaxis, mast cell degranulation, immune cells homeostasis, integrin alpha-IIb/beta-3 signaling in platelets and JNK signaling in B-cells. Regulates proliferation of osteoclast precursors, macrophage programming, phagocytosis and activation and is required for endotoxin tolerance. Involved in the control of cell-cell junctions, CD32a signaling in neutrophils and modulation of EGF-induced phospholipase C activity. Key regulator of neutrophil migration, by governing the formation of the leading edge and polarization required for chemotaxis. Modulates FCGR3/CD16-mediated cytotoxicity in NK cells. Mediates the activin/TGF-beta-induced apoptosis through its Smad-dependent expression. This is Phosphatidylinositol 3,4,5-trisphosphate 5-phosphatase 1 (INPP5D) from Homo sapiens (Human).